Reading from the N-terminus, the 95-residue chain is Glutamyl-tRNA(Gln) amidotransferase subunit C 1 (95 aa).

The protein belongs to the GatC family. In terms of assembly, heterotrimer of A, B and C subunits.

The catalysed reaction is L-glutamyl-tRNA(Gln) + L-glutamine + ATP + H2O = L-glutaminyl-tRNA(Gln) + L-glutamate + ADP + phosphate + H(+). It catalyses the reaction L-aspartyl-tRNA(Asn) + L-glutamine + ATP + H2O = L-asparaginyl-tRNA(Asn) + L-glutamate + ADP + phosphate + 2 H(+). Allows the formation of correctly charged Asn-tRNA(Asn) or Gln-tRNA(Gln) through the transamidation of misacylated Asp-tRNA(Asn) or Glu-tRNA(Gln) in organisms which lack either or both of asparaginyl-tRNA or glutaminyl-tRNA synthetases. The reaction takes place in the presence of glutamine and ATP through an activated phospho-Asp-tRNA(Asn) or phospho-Glu-tRNA(Gln). The protein is Glutamyl-tRNA(Gln) amidotransferase subunit C 1 (gatC1) of Clostridium acetobutylicum (strain ATCC 824 / DSM 792 / JCM 1419 / IAM 19013 / LMG 5710 / NBRC 13948 / NRRL B-527 / VKM B-1787 / 2291 / W).